Reading from the N-terminus, the 494-residue chain is UDP-N-acetylmuramoyl-L-alanyl-D-glutamate--L-lysine ligase (494 aa).

S30 lines the UDP-N-acetyl-alpha-D-muramoyl-L-alanyl-D-glutamate pocket. 110-116 (GTNGKTS) contributes to the ATP binding site. UDP-N-acetyl-alpha-D-muramoyl-L-alanyl-D-glutamate contacts are provided by residues 152-153 (TT), S179, and R187. K219 bears the N6-carboxylysine mark. The L-lysine recognition motif motif lies at 406 to 409 (DNPA).

The protein belongs to the MurCDEF family. MurE subfamily. In terms of processing, carboxylation is probably crucial for Mg(2+) binding and, consequently, for the gamma-phosphate positioning of ATP.

It localises to the cytoplasm. The catalysed reaction is UDP-N-acetyl-alpha-D-muramoyl-L-alanyl-D-glutamate + L-lysine + ATP = UDP-N-acetyl-alpha-D-muramoyl-L-alanyl-gamma-D-glutamyl-L-lysine + ADP + phosphate + H(+). It functions in the pathway cell wall biogenesis; peptidoglycan biosynthesis. Its function is as follows. Catalyzes the addition of L-lysine to the nucleotide precursor UDP-N-acetylmuramoyl-L-alanyl-D-glutamate (UMAG) in the biosynthesis of bacterial cell-wall peptidoglycan. The polypeptide is UDP-N-acetylmuramoyl-L-alanyl-D-glutamate--L-lysine ligase (Staphylococcus epidermidis (strain ATCC 35984 / DSM 28319 / BCRC 17069 / CCUG 31568 / BM 3577 / RP62A)).